The sequence spans 48 residues: ATP synthase protein 8 (48 aa).

A helical membrane pass occupies residues 13-32; the sequence is LTYGFLLMITLLILFSQFFL.

It belongs to the ATPase protein 8 family. F-type ATPases have 2 components, CF(1) - the catalytic core - and CF(0) - the membrane proton channel. In yeast, the dimeric form of ATP synthase consists of 17 polypeptides: alpha, beta, gamma, delta, epsilon, 4 (B), 5 (OSCP), 6 (A), 8, 9 (C), d, E (Tim11), f, g, h, i/j and k.

Its subcellular location is the mitochondrion membrane. Its function is as follows. Mitochondrial membrane ATP synthase (F(1)F(0) ATP synthase or Complex V) produces ATP from ADP in the presence of a proton gradient across the membrane which is generated by electron transport complexes of the respiratory chain. F-type ATPases consist of two structural domains, F(1) - containing the extramembraneous catalytic core and F(0) - containing the membrane proton channel, linked together by a central stalk and a peripheral stalk. During catalysis, ATP synthesis in the catalytic domain of F(1) is coupled via a rotary mechanism of the central stalk subunits to proton translocation. Part of the complex F(0) domain. Minor subunit located with subunit a in the membrane. The chain is ATP synthase protein 8 (ATP8) from Saccharomyces cerevisiae (strain ATCC 204508 / S288c) (Baker's yeast).